The chain runs to 353 residues: Trans-enoyl reductase RAP2 (353 aa).

46 to 49 (CDHK) lines the NADP(+) pocket. 131–138 (TGLSTIGM) provides a ligand contact to substrate. NADP(+)-binding positions include 189–192 (SPRN), Tyr-207, and 254–255 (LE). 274 to 278 (GMALL) provides a ligand contact to substrate. 343–344 (VS) contributes to the NADP(+) binding site.

The protein belongs to the zinc-containing alcohol dehydrogenase family. Monomer.

It participates in secondary metabolite biosynthesis. In terms of biological role, trans-enoyl reductase; part of the gene cluster that mediates the biosynthesis of a tyrosine-derived cytochalasan acting as a fungal signal recognized by resistant rice plants and leads to avirulence in Pi33 resistant rice cultivars. The first step in the pathway is catalyzed by the hybrid PKS-NRPS ACE1, assisted by the enoyl reductase RAP1, that are responsible for fusion of the tyrosine precursor and the polyketide backbone. The polyketide synthase module (PKS) of ACE1 is responsible for the synthesis of the polyketide backbone and the downstream nonribosomal peptide synthetase (NRPS) amidates the carboxyl end of the polyketide with the tyrosine precursor. Because ACE1 lacks a designated enoylreductase (ER) domain, the required activity is provided the enoyl reductase RAP1. Reduction by the hydrolyase ORFZ, followed by dehydration and intra-molecular Diels-Alder cyclization by the Diels-Alderase ORF3 then yield the required isoindolone-fused macrocycle. A number of oxidative steps catalyzed by the tailoring enzymes identified within the cluster, including cytochrome P450 monooxygenases CYP1 to CYP4, the FAD-linked oxidoreductase OXR2 and the short-chain dehydrogenase/reductase OXR1, are further required to afford the final cytochalasans that confer avirulence and which have still to be identified. The monooxygenase CYP1 has been shown to be a site-selective C-18 hydroxylase whereas the function of CYP3 is the site-selective epoxidation of the C-6/C-7 olefin that is present in some intermediate compounds. Finally, SYN2 and RAP2 are not required for avirulence in Pi33 resistant rice cultivars. The polypeptide is Trans-enoyl reductase RAP2 (Pyricularia oryzae (strain 70-15 / ATCC MYA-4617 / FGSC 8958) (Rice blast fungus)).